The chain runs to 217 residues: MALVIKLSGRVFEDEELVFKYAGVIRNLSGKVAVVTGGGEVARRYIAIAKRGGASNTFQDLLGIYASRLNALLLISLLKDAYPRVPANIEEFLEAWSGHRIVVTGGFQPGQSTATVAALVAEAVGASALLNAANIDAVYSDDPRRNPNAQRLRELKYDEFEKIIRSSSLPGGYELMDVWSISILKRNCITTYVFDGRRPDHVVAAARGENPGSKITC.

Residue Lys6–Arg10 participates in ATP binding. Gly38 is a binding site for UMP. 2 residues coordinate ATP: Gly39 and Arg43. UMP is bound by residues Asp60 and Phe107 to Thr113. 3 residues coordinate ATP: Asn134, Tyr139, and Asp142.

The protein belongs to the UMP kinase family. In terms of assembly, homohexamer.

It is found in the cytoplasm. The catalysed reaction is UMP + ATP = UDP + ADP. Its pathway is pyrimidine metabolism; CTP biosynthesis via de novo pathway; UDP from UMP (UMPK route): step 1/1. Its activity is regulated as follows. Inhibited by UTP. Functionally, catalyzes the reversible phosphorylation of UMP to UDP. The sequence is that of Uridylate kinase from Pyrobaculum aerophilum (strain ATCC 51768 / DSM 7523 / JCM 9630 / CIP 104966 / NBRC 100827 / IM2).